A 466-amino-acid chain; its full sequence is Ribosomal protein uS12 methylthiotransferase RimO (466 aa).

One can recognise an MTTase N-terminal domain in the interval 16–127 (PKVAFAHLGC…IVDVLQRVEA (112 aa)). Residues Cys25, Cys61, Cys90, Cys165, Cys169, and Cys172 each contribute to the [4Fe-4S] cluster site. One can recognise a Radical SAM core domain in the interval 151–380 (TTDQAVAYLK…MALQQPIAAE (230 aa)). The region spanning 383 to 454 (QRWVGKTVDV…IYDLTGHIVG (72 aa)) is the TRAM domain.

Belongs to the methylthiotransferase family. RimO subfamily. It depends on [4Fe-4S] cluster as a cofactor.

The protein resides in the cytoplasm. The enzyme catalyses L-aspartate(89)-[ribosomal protein uS12]-hydrogen + (sulfur carrier)-SH + AH2 + 2 S-adenosyl-L-methionine = 3-methylsulfanyl-L-aspartate(89)-[ribosomal protein uS12]-hydrogen + (sulfur carrier)-H + 5'-deoxyadenosine + L-methionine + A + S-adenosyl-L-homocysteine + 2 H(+). Catalyzes the methylthiolation of an aspartic acid residue of ribosomal protein uS12. The chain is Ribosomal protein uS12 methylthiotransferase RimO from Synechococcus sp. (strain CC9902).